The following is a 183-amino-acid chain: GTP cyclohydrolase 1 (183 aa).

Zn(2+)-binding residues include C71, H74, and C142.

The protein belongs to the GTP cyclohydrolase I family. As to quaternary structure, homomer.

It catalyses the reaction GTP + H2O = 7,8-dihydroneopterin 3'-triphosphate + formate + H(+). It functions in the pathway cofactor biosynthesis; 7,8-dihydroneopterin triphosphate biosynthesis; 7,8-dihydroneopterin triphosphate from GTP: step 1/1. The protein is GTP cyclohydrolase 1 of Leptospira biflexa serovar Patoc (strain Patoc 1 / Ames).